We begin with the raw amino-acid sequence, 471 residues long: Glutamate--tRNA ligase 1 (471 aa).

Positions 10-20 (PSPTGFLHIGG) match the 'HIGH' region motif. The disordered stretch occupies residues 113 to 140 (ARKEGRPPRYDGRWRDRDPSEAPKDRDP). The 'KMSKS' region signature appears at 239-243 (KLSKR). Lys242 is a binding site for ATP.

Belongs to the class-I aminoacyl-tRNA synthetase family. Glutamate--tRNA ligase type 1 subfamily. In terms of assembly, monomer.

Its subcellular location is the cytoplasm. The enzyme catalyses tRNA(Glu) + L-glutamate + ATP = L-glutamyl-tRNA(Glu) + AMP + diphosphate. Functionally, catalyzes the attachment of glutamate to tRNA(Glu) in a two-step reaction: glutamate is first activated by ATP to form Glu-AMP and then transferred to the acceptor end of tRNA(Glu). The chain is Glutamate--tRNA ligase 1 from Xanthobacter autotrophicus (strain ATCC BAA-1158 / Py2).